Here is a 206-residue protein sequence, read N- to C-terminus: HTH-type transcriptional regulator BetI (206 aa).

One can recognise an HTH tetR-type domain in the interval 8-68 (PLRRKALVDA…ETIRSLLRDL (61 aa)). A DNA-binding region (H-T-H motif) is located at residues 31–50 (TMSDIAREAGVSAALAHHYF).

Its pathway is amine and polyamine biosynthesis; betaine biosynthesis via choline pathway [regulation]. Its function is as follows. Repressor involved in the biosynthesis of the osmoprotectant glycine betaine. It represses transcription of the choline transporter BetT and the genes of BetAB involved in the synthesis of glycine betaine. This chain is HTH-type transcriptional regulator BetI, found in Agrobacterium fabrum (strain C58 / ATCC 33970) (Agrobacterium tumefaciens (strain C58)).